The chain runs to 238 residues: Ion-translocating oxidoreductase complex subunit E (238 aa).

Helical transmembrane passes span A24–V44, L52–M72, V84–M104, E106–G126, I141–I161, and G195–A215.

It belongs to the NqrDE/RnfAE family. In terms of assembly, the complex is composed of six subunits: RnfA, RnfB, RnfC, RnfD, RnfE and RnfG.

It localises to the cell inner membrane. Functionally, part of a membrane-bound complex that couples electron transfer with translocation of ions across the membrane. The protein is Ion-translocating oxidoreductase complex subunit E of Azotobacter vinelandii (strain DJ / ATCC BAA-1303).